Consider the following 1029-residue polypeptide: Multidrug resistance protein MdtC (1029 aa).

Helical transmembrane passes span 15–35 (ILLS…LPVA), 333–353 (EVEQ…FLFL), 360–380 (LIPA…MYLC), 387–407 (LSLM…IVAL), 431–451 (VGFT…PLLL), 469–489 (VAIG…CGWL), 528–548 (LVGL…ISIP), 853–873 (VILI…LYES), 897–917 (AFDA…IGIV), 953–973 (PIMM…IASG), and 984–1004 (ITIV…TPVV).

It belongs to the resistance-nodulation-cell division (RND) (TC 2.A.6) family. MdtC subfamily. As to quaternary structure, part of a tripartite efflux system composed of MdtA, MdtB and MdtC. MdtC forms a heteromultimer with MdtB.

It localises to the cell inner membrane. The chain is Multidrug resistance protein MdtC from Cronobacter sakazakii (strain ATCC BAA-894) (Enterobacter sakazakii).